Here is a 273-residue protein sequence, read N- to C-terminus: Undecaprenyl-diphosphatase (273 aa).

Helical transmembrane passes span 13–35, 45–62, 82–102, 108–128, 186–206, 219–239, and 250–270; these read GLVE…VFGN, VFEI…VFEY, FVLN…LFGK, LFNP…ILWV, TEFS…YDVL, LILI…KALL, and FAYY…SGWI.

It belongs to the UppP family.

It localises to the cell inner membrane. It carries out the reaction di-trans,octa-cis-undecaprenyl diphosphate + H2O = di-trans,octa-cis-undecaprenyl phosphate + phosphate + H(+). Functionally, catalyzes the dephosphorylation of undecaprenyl diphosphate (UPP). Confers resistance to bacitracin. The sequence is that of Undecaprenyl-diphosphatase from Neisseria meningitidis serogroup A / serotype 4A (strain DSM 15465 / Z2491).